The following is a 468-amino-acid chain: uncharacterized protein (468 aa).

6 helical membrane-spanning segments follow: residues 59–79, 135–155, 215–235, 297–317, 348–368, and 385–405; these read IPIVIIAVIYSSFIFFFALFI, TWINSILEILALIYSFLLLLV, VFPFTPCPLPLLLFPIFLSIL, THCCLNVFASSAFFVLLMVLV, HFIPLILTVVIELVITGLVSY, and VFTVMFTIIAVFRFVFIIILF.

It is found in the membrane. This is an uncharacterized protein from Caenorhabditis elegans.